A 266-amino-acid polypeptide reads, in one-letter code: Gasdermin bGSDM (266 aa).

Cys6 is lipidated: S-palmitoyl cysteine. 4 beta stranded membrane passes run 70-86, 99-117, 163-180, and 189-205; these read ISHSETSRKSLQAAGNF, APKLDLSFARGAVVTFSFS, AIDMTLATDGSAKVDVQA, and LGGKAECEVKSSTTISF. A C-terminal region region spans residues 245-266; it reads GAAEPYLLRRGQVLIVEDMQAT.

Belongs to the bacterial gasdermin family. As to quaternary structure, monomer. In terms of assembly, forms large, homooligomeric ring-shaped pores when inserted in membranes. In terms of processing, cleavage by the adjacently encoded protease (probably ISF6_0256) predicted to occur between Glu-244 and Gly-245 relieves autoinhibition, releasing the N-terminus which initiates loss of cell integrity. Palmitoylation helps stabilize the inactive state; may self palmitoylate. Palmitoylation plays a significant role in pore formation.

Its subcellular location is the cytoplasm. It localises to the cell inner membrane. Its activity is regulated as follows. The full-length protein before cleavage is inactive: intramolecular interactions between the N-terminal domain and the C-terminal region as well as the lipid modification, mediate autoinhibition. The pyroptosis-like-inducing activity is carried by the released N-terminal domain (Gasdermin bGSDM, N-terminus). Functionally, precursor of a pore-forming protein involved in defense against bacteriophages. Cleavage of this precursor by its dedicated, neighboring protease (probably ISF6_0256) releases the active moiety (gasdermin bGSDM, N-terminus) which inserts into membranes, forming pores and triggering cell death. Its function is as follows. Pore-forming protein that causes membrane permeabilization via a pyroptosis-like activity. Makes ring-like pores with an interior pore diameter of 300-400 Angstroms, when integrated in liposomes. In Piscinibacter sakaiensis (Ideonella sakaiensis), this protein is Gasdermin bGSDM.